The sequence spans 306 residues: Probable zinc metalloprotease VDBG_06923 (306 aa).

Positions 1–28 (MNYEAEQPGANDDASGVAVALELARVLA) are cleaved as a signal peptide. Zn(2+) contacts are provided by D12 and E45. An N-linked (GlcNAc...) asparagine glycan is attached at N60. D72 is a binding site for Zn(2+). Residues 218 to 306 (APAKVNNVRV…KSPVTIPFPT (89 aa)) form the Fibronectin type-III domain. 3 N-linked (GlcNAc...) asparagine glycosylation sites follow: N228, N234, and N244.

The protein belongs to the peptidase M28 family. M28B subfamily. Requires Zn(2+) as cofactor.

The protein localises to the secreted. The polypeptide is Probable zinc metalloprotease VDBG_06923 (Verticillium alfalfae (strain VaMs.102 / ATCC MYA-4576 / FGSC 10136) (Verticillium wilt of alfalfa)).